A 2167-amino-acid chain; its full sequence is Myosin-VIIa (2167 aa).

Residues 63 to 733 (QGVEDMISLG…HDLFLEQERD (671 aa)) enclose the Myosin motor domain. 156-163 (GESGAGKT) serves as a coordination point for ATP. Actin-binding regions lie at residues 612–634 (LDALMKTLSSCQPFFIRCIKPNE) and 712–726 (QLGHTKVFLKDAHDL). IQ domains follow at residues 736–758 (LTRKILILQRSIRGWVYRRRFLR), 759–788 (LRAAAITVQRFWKGYAQRKRYRNMRVGYMR), 805–827 (LRGHIVGLQAHARGYLVRREYGH), and 828–857 (KMWAVIKIQSHVRRMIAMRRYRKLRLEHKQ). A coiled-coil region spans residues 886–919 (QHYRDRLHELERREIQEQLENRRRVEVNMNIIND). A MyTH4 1 domain is found at 1008-1245 (YAKKALKHPL…PSWLELQATK (238 aa)). Residues 1250-1560 (IMLPITFMDG…YFLDGLKKRS (311 aa)) enclose the FERM 1 domain. An SH3 domain is found at 1558 to 1627 (KRSKYVIALQ…PAETVYVLPT (70 aa)). Ser-1651 and Ser-1654 each carry phosphoserine. The 149-residue stretch at 1701–1849 (YSRDPIKAPL…PHQVEVEAIQ (149 aa)) folds into the MyTH4 2 domain. The region spanning 1855 to 2158 (IFHKVYFPDD…SYISLMLTNM (304 aa)) is the FERM 2 domain. Thr-2045 bears the Phosphothreonine mark.

Belongs to the TRAFAC class myosin-kinesin ATPase superfamily. Myosin family. In terms of assembly, homodimerizes in a two headed molecule through the formation of a coiled-coil rod. Homodimers motility is approximately 8-10 times slower than that of myosin V, and its step size is 30 nm, which is consistent with the presence of five IQ motifs in its neck region. Interacts with Cad99C (via the cytoplasmic domain). Interacts with zip and Sans. As to expression, expressed in the setae, micro- and macrochaetae on the head, thorax and wing.

It localises to the cytoplasm. The protein localises to the cell cortex. It is found in the cell projection. Its subcellular location is the microvillus. Myosins are actin-based motor molecules with ATPase activity. Unconventional myosins serve in intracellular movements: can function in cells as a single-molecule cargo transporter. A very slow and high-duty-ratio motor, may be suitable for tension maintenance of actin filaments. Their highly divergent tails are presumed to bind to membranous compartments, which would be moved relative to actin filaments. Plays a key role in the formation of cellular projections and other actin-based functions required for embryonic and larval viability. Necessary for auditory transduction: plays a role in Johnston's organ organization by functioning in scolopidial apical attachment and therefore to acoustic stimulus propagation from the antenna a2/a3 joint to transducing elements. Interaction with the myosin zip may be important for its function in scolopidial apical attachment. During oogenesis it has Cad99c-dependent and Cad99c-independent roles in regulating the shape and spacing of the follicle cell microvilli which secrete eggshell material such as the vitelline membrane. May be required for the normal expression of Cad99c in the follicle cell microvilli. The polypeptide is Myosin-VIIa (Drosophila melanogaster (Fruit fly)).